A 232-amino-acid chain; its full sequence is MIIKKSGGRWQLSLLASVVISAFFLNTAYAWQQEYIVDTQPGLSTERYTWDSDHQPDYNDILSQRIQSSQRALGLEVNLAEETPVDVTSSMSMGWNFPLYEQVTTGPVAALHYDGTTTSMYNEFGDSTTTLTDPLWHASVSTLGWRVDSRLGDLRPWAQISYNQQFGENIWKAQSGLSRMTATNQNGNWLDVTVGADMLLNQNIAAYAALTQAENTTNNSDYLYTMGVSARF.

Residues 1–232 (MIIKKSGGRW…LYTMGVSARF (232 aa)) form the Autotransporter domain.

This is an uncharacterized protein from Escherichia coli (strain K12).